A 353-amino-acid polypeptide reads, in one-letter code: Putative transcription factor MTF1 (353 aa).

2 stretches are compositionally biased toward polar residues: residues 11-26 and 36-58; these read VTRS…TSPA and EPSN…QQGN. Disordered regions lie at residues 11-96 and 129-174; these read VTRS…ALPC and FTTT…TTNP. Composition is skewed to low complexity over residues 59 to 95 and 133 to 145; these read TEAS…PALP and NSSP…SPSS. The span at 148 to 164 shows a compositional bias: basic residues; the sequence is SHTRKNSKYTVRHHRTR. Polar residues predominate over residues 165-174; sequence QSSFNGTTNP.

The protein localises to the nucleus. In terms of biological role, may be involved in transcriptional activation. The sequence is that of Putative transcription factor MTF1 (MTF1) from Mucor circinelloides f. lusitanicus (Mucor racemosus var. lusitanicus).